The chain runs to 208 residues: Frataxin, mitochondrial (208 aa).

The transit peptide at 1–40 (MWTFGRRAAAGLLPRTASRASAWVRNPRGRERIGTCGRRG) directs the protein to the mitochondrion.

It belongs to the frataxin family. Component of the mitochondrial core iron-sulfur cluster (ISC) complex composed of NFS1, LYRM4, NDUFAB1, ISCU, FXN, and FDX2; this complex is a heterohexamer containing two copies of each monomer. Homodimer. Monomer (probable predominant form). Oligomer. Monomers and polymeric aggregates of &gt;1 MDa have been isolated from mitochondria. A small fraction of heterologous overexpressed recombinant frataxin forms high-molecular weight aggregates that incorporate iron. Interacts with LYRM4. Interacts (via ferrous form) with ISCU; the interaction is possible when both are bound to the dimeric form of the cysteine desulfurase complex (NFS1:LYRM4) and the interaction enhances FXN interaction to the dimeric form of the cysteine desulfurase complex (NFS1:LYRM4). Interacts with FECH; one iron-bound FXN monomer seems to interact with a FECH homodimer. Interacts with SDHA and SDHB. Interacts with ACO2; the interaction is dependent on citrate. Interacts with HSPA9. In terms of assembly, interacts with ACO1. Interacts with ISCU (cytoplasmic form). Processed in two steps by mitochondrial processing peptidase (MPP). MPP first cleaves the precursor to intermediate form and subsequently converts the intermediate to yield frataxin mature form (frataxin(81-210)) which is the predominant form. The additional forms, frataxin(56-210) and frataxin(78-210), seem to be produced when the normal maturation process is impaired; their physiological relevance is unsure.

Its subcellular location is the mitochondrion. The protein localises to the cytoplasm. It is found in the cytosol. It carries out the reaction 4 Fe(2+) + O2 + 4 H(+) = 4 Fe(3+) + 2 H2O. In terms of biological role, functions as an activator of persulfide transfer to the scaffoding protein ISCU as component of the core iron-sulfur cluster (ISC) assembly complex and participates to the [2Fe-2S] cluster assembly. Accelerates sulfur transfer from NFS1 persulfide intermediate to ISCU and to small thiols such as L-cysteine and glutathione leading to persulfuration of these thiols and ultimately sulfide release. Binds ferrous ion and is released from FXN upon the addition of both L-cysteine and reduced FDX2 during [2Fe-2S] cluster assembly. The core iron-sulfur cluster (ISC) assembly complex is involved in the de novo synthesis of a [2Fe-2S] cluster, the first step of the mitochondrial iron-sulfur protein biogenesis. This process is initiated by the cysteine desulfurase complex (NFS1:LYRM4:NDUFAB1) that produces persulfide which is delivered on the scaffold protein ISCU in a FXN-dependent manner. Then this complex is stabilized by FDX2 which provides reducing equivalents to accomplish the [2Fe-2S] cluster assembly. Finally, the [2Fe-2S] cluster is transferred from ISCU to chaperone proteins, including HSCB, HSPA9 and GLRX5. May play a role in the protection against iron-catalyzed oxidative stress through its ability to catalyze the oxidation of Fe(2+) to Fe(3+); the oligomeric form but not the monomeric form has in vitro ferroxidase activity. May be able to store large amounts of iron in the form of a ferrihydrite mineral by oligomerization; however, the physiological relevance is unsure as reports are conflicting and the function has only been shown using heterologous overexpression systems. May function as an iron chaperone protein that protects the aconitase [4Fe-4S]2+ cluster from disassembly and promotes enzyme reactivation. May play a role as a high affinity iron binding partner for FECH that is capable of both delivering iron to ferrochelatase and mediating the terminal step in mitochondrial heme biosynthesis. Functionally, modulates the RNA-binding activity of ACO1. May be involved in the cytoplasmic iron-sulfur protein biogenesis. May contribute to oxidative stress resistance and overall cell survival. This chain is Frataxin, mitochondrial, found in Rattus norvegicus (Rat).